Here is a 453-residue protein sequence, read N- to C-terminus: Bifunctional protein GlmU (453 aa).

Residues 1–231 (MERTCLAVIL…EIEMTGCNTR (231 aa)) are pyrophosphorylase. UDP-N-acetyl-alpha-D-glucosamine is bound by residues 10–13 (LAAG), K24, Q77, 82–83 (GT), 105–107 (YGD), G143, E157, N172, and N229. Mg(2+) is bound at residue D107. N229 provides a ligand contact to Mg(2+). The linker stretch occupies residues 232–252 (AELAVIERFWQERRRHQLMLS). Residues 253–453 (GVTMIAPETV…ATKAAKKAKG (201 aa)) form an N-acetyltransferase region. The UDP-N-acetyl-alpha-D-glucosamine site is built by R318 and K336. Catalysis depends on H348, which acts as the Proton acceptor. 2 residues coordinate UDP-N-acetyl-alpha-D-glucosamine: Y351 and N362. Acetyl-CoA contacts are provided by residues A365, 371 to 372 (NY), S390, S408, and R425.

The protein in the N-terminal section; belongs to the N-acetylglucosamine-1-phosphate uridyltransferase family. This sequence in the C-terminal section; belongs to the transferase hexapeptide repeat family. Homotrimer. Requires Mg(2+) as cofactor.

Its subcellular location is the cytoplasm. It catalyses the reaction alpha-D-glucosamine 1-phosphate + acetyl-CoA = N-acetyl-alpha-D-glucosamine 1-phosphate + CoA + H(+). The catalysed reaction is N-acetyl-alpha-D-glucosamine 1-phosphate + UTP + H(+) = UDP-N-acetyl-alpha-D-glucosamine + diphosphate. Its pathway is nucleotide-sugar biosynthesis; UDP-N-acetyl-alpha-D-glucosamine biosynthesis; N-acetyl-alpha-D-glucosamine 1-phosphate from alpha-D-glucosamine 6-phosphate (route II): step 2/2. It participates in nucleotide-sugar biosynthesis; UDP-N-acetyl-alpha-D-glucosamine biosynthesis; UDP-N-acetyl-alpha-D-glucosamine from N-acetyl-alpha-D-glucosamine 1-phosphate: step 1/1. It functions in the pathway bacterial outer membrane biogenesis; LPS lipid A biosynthesis. Functionally, catalyzes the last two sequential reactions in the de novo biosynthetic pathway for UDP-N-acetylglucosamine (UDP-GlcNAc). The C-terminal domain catalyzes the transfer of acetyl group from acetyl coenzyme A to glucosamine-1-phosphate (GlcN-1-P) to produce N-acetylglucosamine-1-phosphate (GlcNAc-1-P), which is converted into UDP-GlcNAc by the transfer of uridine 5-monophosphate (from uridine 5-triphosphate), a reaction catalyzed by the N-terminal domain. This is Bifunctional protein GlmU from Rhizobium leguminosarum bv. trifolii (strain WSM2304).